A 747-amino-acid chain; its full sequence is Heterogeneous nuclear ribonucleoprotein U-like protein 2 (747 aa).

The SAP domain maps to 3–37 (VKRLKVTELRSELQRRGLDSRGLKVDLAQRLQEAL). Disordered regions lie at residues 40-242 (EMLE…EEED) and 627-666 (EEARKLLPPSEKRTNRRNNRNKRNRQNRSRGQGYVGGQRR). The segment covering 73–97 (GDEEEDEEEEEEDEEALLEDEDEEP) has biased composition (acidic residues). Residues 115–125 (EAAAMEAAAEP) are compositionally biased toward low complexity. A compositionally biased stretch (gly residues) spans 137–147 (GSGGVNGGEEQ). Basic and acidic residues predominate over residues 148-163 (GLGKREEDEPEERSGD). Phosphoserine is present on S161. T165 bears the Phosphothreonine mark. Phosphoserine is present on residues S168, S185, S188, S226, and S228. Basic and acidic residues predominate over residues 185–223 (SEKSKPAGSDGERRGVKRQRDEKDEHGRAYYEFREEAYH). The B30.2/SPRY domain occupies 226–419 (SKSPLPPEEE…VELNFGQKEE (194 aa)). The segment covering 232–242 (PEEEAKDEEED) has biased composition (acidic residues). Residues 627-639 (EEARKLLPPSEKR) are compositionally biased toward basic and acidic residues. Positions 640–654 (TNRRNNRNKRNRQNR) are enriched in basic residues. Omega-N-methylarginine is present on residues R656, R684, R738, and R747.

As to quaternary structure, binds to MLF1 and retains it in the nucleus.

It localises to the nucleus. The chain is Heterogeneous nuclear ribonucleoprotein U-like protein 2 (HNRNPUL2) from Homo sapiens (Human).